Consider the following 731-residue polypeptide: MNISQTDAEKLAAGCHGNPFSVLGLHEVAGKLSLRVFLPGAETVEALDPKTGRVIVTLNQTETPGLFEGTAARRKKRFAYHLRITQGAHQWQMDDPYRFGPVIGDIDEYLLGEGSHRRLWSVLGAHVITHEGVAGTHFAVWAPNAQRVSVVGEFNVWDGRRMMMRQRGATGVWEIFVPGIGEGEIYKYEIIAPDGSLLPQKADPVGFGAEHPPRTGSVVRKIDGYAWDDAQWMTRRADVQRIDQPVSIYEVHLGSWRRVPEDGNRPLSYVELADQLVAYVKDMGFTHMEVMPVSEFPFDGSWGYQPIGLFAPTIRHGTLDEFRALVAACHRENIGVILDWVPGHFPEDAHGLGRFDGTALYEHADRKEGFHPDWNTLVYNYGRAEVANYLAANALYWLQEHHVDGLRVDAVASMLYRDYSRKDGEWIPNRDGGRENYEAISFLQKVNTESYGEVPGIMTIAEESTAFPGVSAPVDAGGLGFGFKWNMGWMNDTLQYMQQDPIHRKYHHHEMTFGLHYAFSENFILPLSHDEVVHGKGSLLDKMPGQGDDKFANLRAYYGFMWGHPGKKLLFMGCEFAQGVEWNHDSSLDWHLLDHPQHRGMQNLVRDLNALYRENAALHGLDCAAQGFEWIDENNAEASVLAWLRHGPDGGAPMLVVSNFTPVERSHYRLGVPQAGRWVERLNTNADCYGGTGLGNLGGVQSADIAAAGRPFSIDVVLPPLTTLFFQLDDG.

The active-site Nucleophile is the aspartate 409. Residue glutamate 462 is the Proton donor of the active site.

This sequence belongs to the glycosyl hydrolase 13 family. GlgB subfamily. In terms of assembly, monomer.

It carries out the reaction Transfers a segment of a (1-&gt;4)-alpha-D-glucan chain to a primary hydroxy group in a similar glucan chain.. It functions in the pathway glycan biosynthesis; glycogen biosynthesis. Catalyzes the formation of the alpha-1,6-glucosidic linkages in glycogen by scission of a 1,4-alpha-linked oligosaccharide from growing alpha-1,4-glucan chains and the subsequent attachment of the oligosaccharide to the alpha-1,6 position. The sequence is that of 1,4-alpha-glucan branching enzyme GlgB from Roseobacter denitrificans (strain ATCC 33942 / OCh 114) (Erythrobacter sp. (strain OCh 114)).